Reading from the N-terminus, the 345-residue chain is MPITPQQALQRTIEHREIFHDEMVDLMRQIMRGEVSDAMVSAILTGLRVKKETIGEIAGAATVMREFSRRVEVTDRRHMVDIVGTGGDGSHTFNISTCAMFVAAAGGAKVAKHGNRSVSSKSGSADALEALGAVIELQPEQVAASLAQTGIGFMYAPVHHPAMKVVAPVRREMGVRTIFNILGPLTNPAGSPNILMGVFHPDLVGIQARVLQELGAERALVVWGRDGMDELSLGAGTLVGELRDGQVHEYEVHPEDFGIAMSASRNLKVADAAESRAMLLQVLDNVPGPALDIVALNAGAALYVAGVADSIADGIVRARQVLADGSARACLDAYVAFTQQATAQG.

Residues Gly-84, 87–88, Thr-92, 94–97, 112–120, and Ser-124 each bind 5-phospho-alpha-D-ribose 1-diphosphate; these read GD, NIST, and KHGNRSVSS. Gly-84 serves as a coordination point for anthranilate. Residue Ser-96 participates in Mg(2+) binding. Asn-115 is an anthranilate binding site. Arg-170 serves as a coordination point for anthranilate. Positions 229 and 230 each coordinate Mg(2+).

The protein belongs to the anthranilate phosphoribosyltransferase family. As to quaternary structure, homodimer. Requires Mg(2+) as cofactor.

The catalysed reaction is N-(5-phospho-beta-D-ribosyl)anthranilate + diphosphate = 5-phospho-alpha-D-ribose 1-diphosphate + anthranilate. It participates in amino-acid biosynthesis; L-tryptophan biosynthesis; L-tryptophan from chorismate: step 2/5. Its function is as follows. Catalyzes the transfer of the phosphoribosyl group of 5-phosphorylribose-1-pyrophosphate (PRPP) to anthranilate to yield N-(5'-phosphoribosyl)-anthranilate (PRA). The polypeptide is Anthranilate phosphoribosyltransferase (Xanthomonas campestris pv. campestris (strain 8004)).